An 837-amino-acid polypeptide reads, in one-letter code: Tuftelin-interacting protein 11 (837 aa).

Composition is skewed to basic and acidic residues over residues M1–R13 and V53–P64. Disordered regions lie at residues M1–R21, V53–R72, and L85–A133. The tract at residues M1 to T50 is required for interaction with DHX15. Phosphoserine is present on residues S2, S59, and S98. Over residues E91 to E102 the composition is skewed to acidic residues. Basic and acidic residues predominate over residues K103–P116. Phosphoserine is present on S144. The G-patch domain maps to T149–S195. The segment at I179–P236 is disordered. Position 210 is a phosphoserine (S210). Over residues E217–G231 the composition is skewed to basic and acidic residues. Positions V700–N705 match the Nuclear localization signal motif. Positions I710 to L734 are required for nuclear speckle localization.

This sequence belongs to the TFP11/STIP family. Identified in the spliceosome C complex. Found in the Intron Large (IL) complex, a post-mRNA release spliceosomal complex containing the excised intron, U2, U5 and U6 snRNPs, and splicing factors. Interacts with TUFT1. Interacts with DHX15; indicative for a recruitment of DHX15 to the IL complex. Interacts with GCFC2.

Its subcellular location is the cytoplasm. The protein resides in the nucleus. Functionally, involved in pre-mRNA splicing, specifically in spliceosome disassembly during late-stage splicing events. Intron turnover seems to proceed through reactions in two lariat-intron associated complexes termed Intron Large (IL) and Intron Small (IS). In cooperation with DHX15 seems to mediate the transition of the U2, U5 and U6 snRNP-containing IL complex to the snRNP-free IS complex leading to efficient debranching and turnover of excised introns. May play a role in the differentiation of ameloblasts and odontoblasts or in the forming of the enamel extracellular matrix. The sequence is that of Tuftelin-interacting protein 11 (TFIP11) from Homo sapiens (Human).